The sequence spans 500 residues: Glutathione gamma-glutamylcysteinyltransferase 1 (500 aa).

One can recognise a Peptidase C83 domain in the interval 1-221 (MEVASLYRRV…GFMLVSRRSS (221 aa)). Catalysis depends on residues C56, H162, and D180.

Belongs to the phytochelatin synthase family. Expressed in roots and shoots.

The catalysed reaction is [Glu(-Cys)](n)-Gly + glutathione + H(+) = [Glu(-Cys)](n+1)-Gly + glycine. Requires cadmium for activity. Involved in the synthesis of phytochelatins (PC) and homophytochelatins (hPC), the heavy-metal-binding peptides of plants. This Triticum aestivum (Wheat) protein is Glutathione gamma-glutamylcysteinyltransferase 1 (PCS1).